The chain runs to 291 residues: tRNA dimethylallyltransferase (291 aa).

9–16 is an ATP binding site; sequence GPTASGKT. 11 to 16 is a binding site for substrate; that stretch reads TASGKT. The interval 34 to 37 is interaction with substrate tRNA; that stretch reads DSLQ.

The protein belongs to the IPP transferase family. In terms of assembly, monomer. Requires Mg(2+) as cofactor.

The catalysed reaction is adenosine(37) in tRNA + dimethylallyl diphosphate = N(6)-dimethylallyladenosine(37) in tRNA + diphosphate. Functionally, catalyzes the transfer of a dimethylallyl group onto the adenine at position 37 in tRNAs that read codons beginning with uridine, leading to the formation of N6-(dimethylallyl)adenosine (i(6)A). In Aster yellows witches'-broom phytoplasma (strain AYWB), this protein is tRNA dimethylallyltransferase.